A 122-amino-acid chain; its full sequence is Small ribosomal subunit protein uS13 (122 aa).

The tract at residues Leu-96 to Lys-122 is disordered.

This sequence belongs to the universal ribosomal protein uS13 family. Part of the 30S ribosomal subunit. Forms a loose heterodimer with protein S19. Forms two bridges to the 50S subunit in the 70S ribosome.

In terms of biological role, located at the top of the head of the 30S subunit, it contacts several helices of the 16S rRNA. In the 70S ribosome it contacts the 23S rRNA (bridge B1a) and protein L5 of the 50S subunit (bridge B1b), connecting the 2 subunits; these bridges are implicated in subunit movement. Contacts the tRNAs in the A and P-sites. This is Small ribosomal subunit protein uS13 from Magnetococcus marinus (strain ATCC BAA-1437 / JCM 17883 / MC-1).